Consider the following 273-residue polypeptide: Transposable element Tcb2 transposase (273 aa).

It belongs to the transposase 5 family.

It is found in the nucleus. Functionally, probably essential for transposable element Tcb2 transposition. The chain is Transposable element Tcb2 transposase from Caenorhabditis briggsae.